Here is a 689-residue protein sequence, read N- to C-terminus: Methionine--tRNA ligase (689 aa).

Residues 15–25 (PYANGPIHLGH) carry the 'HIGH' region motif. The Zn(2+) site is built by Cys146, Cys149, Cys159, and Cys162. Residues 332–336 (KMSKS) carry the 'KMSKS' region motif. Residue Lys335 coordinates ATP. A tRNA-binding domain is found at 588-689 (DFAKIDLRIA…EGAQPGMRVK (102 aa)).

Belongs to the class-I aminoacyl-tRNA synthetase family. MetG type 1 subfamily. Homodimer. Zn(2+) is required as a cofactor.

The protein localises to the cytoplasm. The catalysed reaction is tRNA(Met) + L-methionine + ATP = L-methionyl-tRNA(Met) + AMP + diphosphate. Is required not only for elongation of protein synthesis but also for the initiation of all mRNA translation through initiator tRNA(fMet) aminoacylation. The sequence is that of Methionine--tRNA ligase from Shewanella baltica (strain OS223).